Consider the following 419-residue polypeptide: Pyrophosphate--fructose 6-phosphate 1-phosphotransferase (419 aa).

Residue Gly-13 coordinates diphosphate. Substrate is bound by residues 142-144, 190-192, Glu-247, and 297-300; these read TVD, MGR, and YLQR. Asp-144 (proton acceptor) is an active-site residue.

The protein belongs to the phosphofructokinase type A (PFKA) family. PPi-dependent PFK group II subfamily. Clade 'B2' sub-subfamily. In terms of assembly, homodimer. The cofactor is Mg(2+).

The protein resides in the cytoplasm. It carries out the reaction beta-D-fructose 6-phosphate + diphosphate = beta-D-fructose 1,6-bisphosphate + phosphate + H(+). It functions in the pathway carbohydrate degradation; glycolysis; D-glyceraldehyde 3-phosphate and glycerone phosphate from D-glucose: step 3/4. Non-allosteric. Functionally, catalyzes the phosphorylation of D-fructose 6-phosphate, the first committing step of glycolysis. Uses inorganic phosphate (PPi) as phosphoryl donor instead of ATP like common ATP-dependent phosphofructokinases (ATP-PFKs), which renders the reaction reversible, and can thus function both in glycolysis and gluconeogenesis. Consistently, PPi-PFK can replace the enzymes of both the forward (ATP-PFK) and reverse (fructose-bisphosphatase (FBPase)) reactions. The sequence is that of Pyrophosphate--fructose 6-phosphate 1-phosphotransferase from Halomonas elongata (strain ATCC 33173 / DSM 2581 / NBRC 15536 / NCIMB 2198 / 1H9).